A 338-amino-acid polypeptide reads, in one-letter code: Starch-binding domain-containing protein 1 (338 aa).

Topologically, residues 1 to 6 are extracellular; that stretch reads MGAVWS. A helical membrane pass occupies residues 7–23; that stretch reads ALLVGGGLAGALILWLL. The Cytoplasmic segment spans residues 24–338; that stretch reads RGDSGAPGKD…KVVHGWWGIH (315 aa). Disordered stretches follow at residues 30 to 73 and 120 to 148; these read PGKD…RELV and KIPD…WRLP. A compositionally biased stretch (low complexity) spans 36 to 52; it reads AEPPQKGAPPGEAAAPG. A compositionally biased stretch (gly residues) spans 53 to 62; that stretch reads DGPGGGGSGG. A Phosphoserine modification is found at S68. A compositionally biased stretch (basic and acidic residues) spans 122-132; sequence PDTHSRADSEA. Phosphoserine occurs at positions 140, 167, and 179. Residues 185-191 carry the LIR motif; that stretch reads HEDWEVV. S195, S196, S205, S209, S212, S220, and S223 each carry phosphoserine. In terms of domain architecture, CBM20 spans 238-337; sequence SLKPQQVSIQ…DKVVHGWWGI (100 aa).

Interacts with the ATG8 family proteins GABARAP and GABARAPL1. Interacts with several glycogen-associated proteins, such as GYS2 (liver glycogen synthase), GDE (glycogen debranching enzyme), GBE1 (glycogen branching enzyme 1) and EPM2A (Laforin). Ubiquitinated, which leads to proteasomal degradation. As to expression, expressed at high level in glycogen-accumulating organs such as muscle and liver. Trace signals are also found in brain, kidney, and pancreas.

The protein resides in the preautophagosomal structure membrane. It localises to the endoplasmic reticulum membrane. Its subcellular location is the cell membrane. It is found in the sarcolemma. The protein localises to the T-tubule. Its function is as follows. Acts as a cargo receptor for glycogen. Delivers its cargo to an autophagic pathway called glycophagy, resulting in the transport of glycogen to lysosomes. In Mus musculus (Mouse), this protein is Starch-binding domain-containing protein 1.